The chain runs to 842 residues: Protein P (842 aa).

A terminal protein domain (TP) region spans residues 1–177 (MPLSYQHFRR…FCGSPYTWEQ (177 aa)). Residues 178–345 (DLQHGAFLDG…YCLSHLVNLL (168 aa)) are spacer. The segment at 184 to 238 (FLDGPSRVGKEPFHQQSSRIPSRSPVGPSIQSKYQQSRLGLQSQKGPLARGQQGR) is disordered. The span at 212–228 (SIQSKYQQSRLGLQSQK) shows a compositional bias: polar residues. The polymerase/reverse transcriptase domain (RT) stretch occupies residues 346 to 689 (QDWGPCTEHG…YMNLYPVARQ (344 aa)). One can recognise a Reverse transcriptase domain in the interval 356–599 (EYHIRIPRTP…YSLNFMGYVI (244 aa)). Mg(2+) is bound by residues Asp-428, Asp-550, and Asp-551.

This sequence belongs to the hepadnaviridae P protein family.

It carries out the reaction DNA(n) + a 2'-deoxyribonucleoside 5'-triphosphate = DNA(n+1) + diphosphate. The catalysed reaction is Endonucleolytic cleavage to 5'-phosphomonoester.. Its activity is regulated as follows. Activated by host HSP70 and HSP40 in vitro to be able to bind the epsilon loop of the pgRNA. Because deletion of the RNase H region renders the protein partly chaperone-independent, the chaperones may be needed indirectly to relieve occlusion of the RNA-binding site by this domain. Inhibited by several reverse-transcriptase inhibitors: Lamivudine, Adefovir and Entecavir. Functionally, multifunctional enzyme that converts the viral RNA genome into dsDNA in viral cytoplasmic capsids. This enzyme displays a DNA polymerase activity that can copy either DNA or RNA templates, and a ribonuclease H (RNase H) activity that cleaves the RNA strand of RNA-DNA heteroduplexes in a partially processive 3'- to 5'-endonucleasic mode. Neo-synthesized pregenomic RNA (pgRNA) are encapsidated together with the P protein, and reverse-transcribed inside the nucleocapsid. Initiation of reverse-transcription occurs first by binding the epsilon loop on the pgRNA genome, and is initiated by protein priming, thereby the 5'-end of (-)DNA is covalently linked to P protein. Partial (+)DNA is synthesized from the (-)DNA template and generates the relaxed circular DNA (RC-DNA) genome. After budding and infection, the RC-DNA migrates in the nucleus, and is converted into a plasmid-like covalently closed circular DNA (cccDNA). The activity of P protein does not seem to be necessary for cccDNA generation, and is presumably released from (+)DNA by host nuclear DNA repair machinery. In Hepatitis B virus genotype G (isolate United States/USG17/2002) (HBV-G), this protein is Protein P.